The following is a 262-amino-acid chain: NAC domain-containing protein 71 (262 aa).

In terms of domain architecture, NAC spans 6-160 (LPPGFRFHPT…AFALCRVVKK (155 aa)). Residues 107–166 (AGYRKTLVFYEGRAPLGDRTNWFMHEYRLCDIDDHSQKSPNFKGAFALCRVVKKNELKKN) mediate DNA binding.

Its subcellular location is the nucleus. In terms of biological role, transcription factor involved in tissue reunion of wounded inflorescence stems. Required for the division of pith cells in the reunion process, which is dependent on polar-transported auxin and the wound-inducible hormones ethylene and jasmonate. Binds to the promoters of XTH19 and XTH20 to induce their expression via auxin signaling. XTH19 and XTH20 are involved in cell proliferation in the tissue reunion process of incised stems. Involved in hypocotyl graft union formation. Required for the auxin- mediated promotion of vascular tissue proliferation during hypocotyl graft attachment. This is NAC domain-containing protein 71 from Arabidopsis thaliana (Mouse-ear cress).